Here is a 393-residue protein sequence, read N- to C-terminus: Cell division protein FtsZ 2 (393 aa).

A disordered region spans residues 1–28 (MQDIVQDALDNAEAEQREMDGDGDGDEF). Residues 40-44 (GAGNN), 127-129 (GTG), E158, R161, and D204 each bind GTP. The disordered stretch occupies residues 339-393 (GPSTQKQADKSRRELQDVDSKQRAADDAGAGGFGGAHSDGGQDEVEQENGLDVIR). Residues 345 to 364 (QADKSRRELQDVDSKQRAAD) are compositionally biased toward basic and acidic residues. The span at 367-376 (GAGGFGGAHS) shows a compositional bias: gly residues.

This sequence belongs to the FtsZ family. As to quaternary structure, homodimer. Polymerizes to form a dynamic ring structure in a strictly GTP-dependent manner. Interacts directly with several other division proteins.

It localises to the cytoplasm. Essential cell division protein that forms a contractile ring structure (Z ring) at the future cell division site. The regulation of the ring assembly controls the timing and the location of cell division. One of the functions of the FtsZ ring is to recruit other cell division proteins to the septum to produce a new cell wall between the dividing cells. Binds GTP and shows GTPase activity. Overexpression causes significant changes in cell morphology. This Halobacterium salinarum (strain ATCC 29341 / DSM 671 / R1) protein is Cell division protein FtsZ 2.